The following is a 96-amino-acid chain: Co-chaperonin GroES (96 aa).

This sequence belongs to the GroES chaperonin family. As to quaternary structure, heptamer of 7 subunits arranged in a ring. Interacts with the chaperonin GroEL.

It is found in the cytoplasm. Together with the chaperonin GroEL, plays an essential role in assisting protein folding. The GroEL-GroES system forms a nano-cage that allows encapsulation of the non-native substrate proteins and provides a physical environment optimized to promote and accelerate protein folding. GroES binds to the apical surface of the GroEL ring, thereby capping the opening of the GroEL channel. The sequence is that of Co-chaperonin GroES from Shewanella baltica (strain OS223).